The sequence spans 367 residues: Spermidine/putrescine import ATP-binding protein PotA (367 aa).

Positions 10 to 240 constitute an ABC transporter domain; it reads IEFKNVSLDY…PINHFVANFI (231 aa). 42 to 49 lines the ATP pocket; sequence GPSGSGKS.

It belongs to the ABC transporter superfamily. Spermidine/putrescine importer (TC 3.A.1.11.1) family. The complex is composed of two ATP-binding proteins (PotA), two transmembrane proteins (PotB and PotC) and a solute-binding protein (PotD).

The protein resides in the cell membrane. The catalysed reaction is ATP + H2O + polyamine-[polyamine-binding protein]Side 1 = ADP + phosphate + polyamineSide 2 + [polyamine-binding protein]Side 1.. In terms of biological role, part of the ABC transporter complex PotABCD involved in spermidine/putrescine import. Responsible for energy coupling to the transport system. This Oenococcus oeni (strain ATCC BAA-331 / PSU-1) protein is Spermidine/putrescine import ATP-binding protein PotA.